Consider the following 263-residue polypeptide: Bradykinin-potentiating and C-type natriuretic peptides (263 aa).

The signal sequence occupies residues 1 to 23 (MFVSRLAASGLLLLALMALSLDG). Residues 24–30 (KPVQQWS) constitute a propeptide that is removed on maturation. Position 31 is a pyrrolidone carboxylic acid (Gln31). A propeptide spanning residues 42-48 (LVVQQWS) is cleaved from the precursor. Gln49 is subject to Pyrrolidone carboxylic acid. The propeptide occupies 60–66 (LVVQQWS). Position 67 is a pyrrolidone carboxylic acid (Gln67). A propeptide spanning residues 78 to 84 (LVVQQWS) is cleaved from the precursor. At Gln85 the chain carries Pyrrolidone carboxylic acid. Positions 89–95 (PRPKIPP) are angiotensin-converting enzyme active site binding. A propeptide spanning residues 96 to 102 (LVVQQWS) is cleaved from the precursor. A Pyrrolidone carboxylic acid modification is found at Gln103. Positions 107–113 (PRPKIPP) are angiotensin-converting enzyme active site binding. Residues 114 to 116 (LVV) constitute a propeptide that is removed on maturation. Gln117 is subject to Pyrrolidone carboxylic acid. Positions 128–130 (LLL) are excised as a propeptide. Gln131 carries the pyrrolidone carboxylic acid modification. A propeptide spanning residues 137–241 (AGGTTALREE…ARRLKGLVKK (105 aa)) is cleaved from the precursor. Disordered stretches follow at residues 152–171 (EAASGPAAAGADGGRSGSKA) and 177–205 (RLSKSKGASATSASASRPMRDLRTDGKQA). Residues 181–192 (SKGASATSASAS) show a composition bias toward low complexity. Positions 194-204 (PMRDLRTDGKQ) are enriched in basic and acidic residues. A disulfide bridge connects residues Cys247 and Cys263.

In the N-terminal section; belongs to the bradykinin-potentiating peptide family. It in the C-terminal section; belongs to the natriuretic peptide family. As to expression, expressed by the venom gland.

The protein resides in the secreted. Inhibits the rabbit lung angiotensin-converting enzyme (ACE) (IC(50)=15 uM). Contracts the rat gastric fundus smooth muscle in a rapid and transient manner. Functionally, causes no contraction of the rat gastric fundus smooth muscle even at high concentrations. Causes very weak contraction of the isolated guinea pig ileum. Causes weak contraction on rat uterus. In terms of biological role, inhibits the activity of the angiotensin-converting enzyme (ACE) by a preferential interaction with its C-domain (Ki=30 nM, IC(50)=1.1 uM). It binds ACE in a zinc-independent manner. Also potentiates the hypotensive effects of bradykinin. Causes high contraction of the isolated guinea pig ileum and weak contraction on rat uterus. Its function is as follows. Inhibits the activity of the angiotensin-converting enzyme (ACE) by interacting with the same potency to its C- and N-domains. Inhibits the rabbit lung angiotensin-converting enzyme (ACE) (IC(50)=7.1 uM). Causes weak contraction of the isolated guinea pig ileum. Causes weak contraction on rat uterus. Inhibits the rabbit lung angiotensin-converting enzyme (ACE) (IC(50)=46 uM). Synthetic Leu3-blomhotin contracts the rat gastric fundus smooth muscle in a rapid and transient manner. Causes moderate contraction of the isolated guinea pig ileum. Causes weak contraction on rat uterus. Functionally, causes weak contraction of the isolated guinea pig ileum. Causes about 50-fold more potentiating activity on rat uterus than on guinea pig ileum. In terms of biological role, synthetic peptide potentiates the bradykinin in vivo. Its function is as follows. Synthetic peptide does not show any bradykinin-potentiating effects. Has a vasorelaxant activity in rat aortic strips and a diuretic potency in anesthetized rats. May act by activating natriuretic receptors (NPR1 and/or NPR2). The polypeptide is Bradykinin-potentiating and C-type natriuretic peptides (Gloydius blomhoffii (Mamushi)).